Reading from the N-terminus, the 228-residue chain is L-ribulose-5-phosphate 4-epimerase UlaF (228 aa).

Substrate is bound by residues 26–27 (GN), 43–44 (SG), and 72–73 (SS). D74, H93, and H95 together coordinate Zn(2+). The active-site Proton donor/acceptor is D118. H167 is a binding site for Zn(2+). The active-site Proton donor/acceptor is the Y225.

It belongs to the aldolase class II family. AraD/FucA subfamily. Requires Zn(2+) as cofactor.

It catalyses the reaction L-ribulose 5-phosphate = D-xylulose 5-phosphate. It participates in cofactor degradation; L-ascorbate degradation; D-xylulose 5-phosphate from L-ascorbate: step 4/4. Its function is as follows. Catalyzes the isomerization of L-ribulose 5-phosphate to D-xylulose 5-phosphate. Is involved in the anaerobic L-ascorbate utilization. The sequence is that of L-ribulose-5-phosphate 4-epimerase UlaF from Escherichia coli O8 (strain IAI1).